The sequence spans 217 residues: 3,4-dihydroxy-2-butanone 4-phosphate synthase (217 aa).

D-ribulose 5-phosphate-binding positions include 37 to 38 (RE), aspartate 42, 150 to 154 (RRGHT), and glutamate 174. Glutamate 38 contributes to the Mg(2+) binding site. Residue histidine 153 participates in Mg(2+) binding.

This sequence belongs to the DHBP synthase family. In terms of assembly, homodimer. Requires Mg(2+) as cofactor. It depends on Mn(2+) as a cofactor.

It catalyses the reaction D-ribulose 5-phosphate = (2S)-2-hydroxy-3-oxobutyl phosphate + formate + H(+). It functions in the pathway cofactor biosynthesis; riboflavin biosynthesis; 2-hydroxy-3-oxobutyl phosphate from D-ribulose 5-phosphate: step 1/1. Its function is as follows. Catalyzes the conversion of D-ribulose 5-phosphate to formate and 3,4-dihydroxy-2-butanone 4-phosphate. This Yersinia enterocolitica serotype O:8 / biotype 1B (strain NCTC 13174 / 8081) protein is 3,4-dihydroxy-2-butanone 4-phosphate synthase.